The primary structure comprises 488 residues: Glutamyl-tRNA(Gln) amidotransferase subunit A (488 aa).

Catalysis depends on charge relay system residues K78 and S153. The active-site Acyl-ester intermediate is S177.

Belongs to the amidase family. GatA subfamily. In terms of assembly, heterotrimer of A, B and C subunits.

The enzyme catalyses L-glutamyl-tRNA(Gln) + L-glutamine + ATP + H2O = L-glutaminyl-tRNA(Gln) + L-glutamate + ADP + phosphate + H(+). Allows the formation of correctly charged Gln-tRNA(Gln) through the transamidation of misacylated Glu-tRNA(Gln) in organisms which lack glutaminyl-tRNA synthetase. The reaction takes place in the presence of glutamine and ATP through an activated gamma-phospho-Glu-tRNA(Gln). The sequence is that of Glutamyl-tRNA(Gln) amidotransferase subunit A from Thermoanaerobacter pseudethanolicus (strain ATCC 33223 / 39E) (Clostridium thermohydrosulfuricum).